Consider the following 138-residue polypeptide: Cysteine desulfuration protein SufE (138 aa).

Cysteine 51 (cysteine persulfide intermediate) is an active-site residue.

It belongs to the SufE family. In terms of assembly, homodimer. Interacts with SufS.

Its subcellular location is the cytoplasm. The protein operates within cofactor biosynthesis; iron-sulfur cluster biosynthesis. Its function is as follows. Participates in cysteine desulfuration mediated by SufS. Cysteine desulfuration mobilizes sulfur from L-cysteine to yield L-alanine and constitutes an essential step in sulfur metabolism for biosynthesis of a variety of sulfur-containing biomolecules. Functions as a sulfur acceptor for SufS, by mediating the direct transfer of the sulfur atom from the S-sulfanylcysteine of SufS, an intermediate product of cysteine desulfuration process. This Salmonella arizonae (strain ATCC BAA-731 / CDC346-86 / RSK2980) protein is Cysteine desulfuration protein SufE.